The sequence spans 366 residues: Ribosomal RNA large subunit methyltransferase M (366 aa).

Residues Ser188, 221-224, Asp240, Asp260, and Asp277 each bind S-adenosyl-L-methionine; that span reads CPGG. Lys306 serves as the catalytic Proton acceptor.

The protein belongs to the class I-like SAM-binding methyltransferase superfamily. RNA methyltransferase RlmE family. RlmM subfamily. As to quaternary structure, monomer.

The protein resides in the cytoplasm. It carries out the reaction cytidine(2498) in 23S rRNA + S-adenosyl-L-methionine = 2'-O-methylcytidine(2498) in 23S rRNA + S-adenosyl-L-homocysteine + H(+). In terms of biological role, catalyzes the 2'-O-methylation at nucleotide C2498 in 23S rRNA. The sequence is that of Ribosomal RNA large subunit methyltransferase M from Escherichia coli O45:K1 (strain S88 / ExPEC).